We begin with the raw amino-acid sequence, 366 residues long: S-adenosylmethionine:tRNA ribosyltransferase-isomerase (366 aa).

The protein belongs to the QueA family. Monomer.

It is found in the cytoplasm. It catalyses the reaction 7-aminomethyl-7-carbaguanosine(34) in tRNA + S-adenosyl-L-methionine = epoxyqueuosine(34) in tRNA + adenine + L-methionine + 2 H(+). The protein operates within tRNA modification; tRNA-queuosine biosynthesis. In terms of biological role, transfers and isomerizes the ribose moiety from AdoMet to the 7-aminomethyl group of 7-deazaguanine (preQ1-tRNA) to give epoxyqueuosine (oQ-tRNA). This is S-adenosylmethionine:tRNA ribosyltransferase-isomerase from Caulobacter vibrioides (strain ATCC 19089 / CIP 103742 / CB 15) (Caulobacter crescentus).